Here is a 330-residue protein sequence, read N- to C-terminus: D-lactate dehydrogenase (330 aa).

Residues 156–157, D176, 206–207, 233–235, and D259 each bind NAD(+); these read RI, VP, and AAR. R235 is a catalytic residue. E264 is an active-site residue. The active-site Proton donor is H296.

Belongs to the D-isomer specific 2-hydroxyacid dehydrogenase family.

It carries out the reaction (R)-lactate + NAD(+) = pyruvate + NADH + H(+). This is D-lactate dehydrogenase (ldhD) from Staphylococcus aureus (strain MSSA476).